A 456-amino-acid polypeptide reads, in one-letter code: Adenylosuccinate lyase (456 aa).

N(6)-(1,2-dicarboxyethyl)-AMP is bound by residues 15–16, 90–92, and 122–123; these read RY, NHD, and TS. His-171 acts as the Proton donor/acceptor in catalysis. Gln-248 lines the N(6)-(1,2-dicarboxyethyl)-AMP pocket. Residue Ser-296 is the Proton donor/acceptor of the active site. Residues Ser-297, 302 to 304, Asn-310, Arg-336, and 341 to 345 each bind N(6)-(1,2-dicarboxyethyl)-AMP; these read KVN and STVLR.

Belongs to the lyase 1 family. Adenylosuccinate lyase subfamily. In terms of assembly, homotetramer. Residues from neighboring subunits contribute catalytic and substrate-binding residues to each active site.

It carries out the reaction N(6)-(1,2-dicarboxyethyl)-AMP = fumarate + AMP. The catalysed reaction is (2S)-2-[5-amino-1-(5-phospho-beta-D-ribosyl)imidazole-4-carboxamido]succinate = 5-amino-1-(5-phospho-beta-D-ribosyl)imidazole-4-carboxamide + fumarate. Its pathway is purine metabolism; AMP biosynthesis via de novo pathway; AMP from IMP: step 2/2. It functions in the pathway purine metabolism; IMP biosynthesis via de novo pathway; 5-amino-1-(5-phospho-D-ribosyl)imidazole-4-carboxamide from 5-amino-1-(5-phospho-D-ribosyl)imidazole-4-carboxylate: step 2/2. Its function is as follows. Catalyzes two reactions in de novo purine nucleotide biosynthesis. Catalyzes the breakdown of 5-aminoimidazole- (N-succinylocarboxamide) ribotide (SAICAR or 2-[5-amino-1-(5-phospho-beta-D-ribosyl)imidazole-4-carboxamido]succinate) to 5-aminoimidazole-4-carboxamide ribotide (AICAR or 5-amino-1-(5-phospho-beta-D-ribosyl)imidazole-4-carboxamide) and fumarate, and of adenylosuccinate (ADS or N(6)-(1,2-dicarboxyethyl)-AMP) to adenosine monophosphate (AMP) and fumarate. The chain is Adenylosuccinate lyase (purB) from Pseudomonas aeruginosa (strain ATCC 15692 / DSM 22644 / CIP 104116 / JCM 14847 / LMG 12228 / 1C / PRS 101 / PAO1).